A 513-amino-acid chain; its full sequence is ATP synthase subunit alpha (513 aa).

169 to 176 (GDRQTGKT) contacts ATP.

The protein belongs to the ATPase alpha/beta chains family. F-type ATPases have 2 components, CF(1) - the catalytic core - and CF(0) - the membrane proton channel. CF(1) has five subunits: alpha(3), beta(3), gamma(1), delta(1), epsilon(1). CF(0) has three main subunits: a(1), b(2) and c(9-12). The alpha and beta chains form an alternating ring which encloses part of the gamma chain. CF(1) is attached to CF(0) by a central stalk formed by the gamma and epsilon chains, while a peripheral stalk is formed by the delta and b chains.

The protein localises to the cell inner membrane. The catalysed reaction is ATP + H2O + 4 H(+)(in) = ADP + phosphate + 5 H(+)(out). In terms of biological role, produces ATP from ADP in the presence of a proton gradient across the membrane. The alpha chain is a regulatory subunit. This chain is ATP synthase subunit alpha, found in Haemophilus influenzae (strain 86-028NP).